Reading from the N-terminus, the 313-residue chain is Ribosomal RNA small subunit methyltransferase H (313 aa).

Residues 35–37 (GGH), D55, F79, D100, and Q107 contribute to the S-adenosyl-L-methionine site.

It belongs to the methyltransferase superfamily. RsmH family.

It localises to the cytoplasm. It carries out the reaction cytidine(1402) in 16S rRNA + S-adenosyl-L-methionine = N(4)-methylcytidine(1402) in 16S rRNA + S-adenosyl-L-homocysteine + H(+). Functionally, specifically methylates the N4 position of cytidine in position 1402 (C1402) of 16S rRNA. In Burkholderia orbicola (strain AU 1054), this protein is Ribosomal RNA small subunit methyltransferase H.